The primary structure comprises 554 residues: uncharacterized protein (554 aa).

Ca(2+) is bound by residues aspartate 327 and asparagine 328.

The protein belongs to the sulfatase family. The cofactor is Ca(2+).

The protein localises to the cytoplasm. The protein resides in the nucleus. This is an uncharacterized protein from Schizosaccharomyces pombe (strain 972 / ATCC 24843) (Fission yeast).